The sequence spans 168 residues: SsrA-binding protein (168 aa).

Belongs to the SmpB family.

The protein resides in the cytoplasm. Functionally, required for rescue of stalled ribosomes mediated by trans-translation. Binds to transfer-messenger RNA (tmRNA), required for stable association of tmRNA with ribosomes. tmRNA and SmpB together mimic tRNA shape, replacing the anticodon stem-loop with SmpB. tmRNA is encoded by the ssrA gene; the 2 termini fold to resemble tRNA(Ala) and it encodes a 'tag peptide', a short internal open reading frame. During trans-translation Ala-aminoacylated tmRNA acts like a tRNA, entering the A-site of stalled ribosomes, displacing the stalled mRNA. The ribosome then switches to translate the ORF on the tmRNA; the nascent peptide is terminated with the 'tag peptide' encoded by the tmRNA and targeted for degradation. The ribosome is freed to recommence translation, which seems to be the essential function of trans-translation. This Mycobacterium sp. (strain JLS) protein is SsrA-binding protein.